A 143-amino-acid chain; its full sequence is uncharacterized protein (143 aa).

Positions 11–139 (EYELTTFIRR…FGELLQRMNK (129 aa)) constitute an HTH marR-type domain. Positions 53-76 (VKELAESFKLDISTLSRQAAALEA) form a DNA-binding region, H-T-H motif.

This is an uncharacterized protein from Bacillus subtilis (strain 168).